A 170-amino-acid polypeptide reads, in one-letter code: Adenine phosphoribosyltransferase (170 aa).

The protein belongs to the purine/pyrimidine phosphoribosyltransferase family. As to quaternary structure, homodimer.

The protein resides in the cytoplasm. It carries out the reaction AMP + diphosphate = 5-phospho-alpha-D-ribose 1-diphosphate + adenine. It functions in the pathway purine metabolism; AMP biosynthesis via salvage pathway; AMP from adenine: step 1/1. In terms of biological role, catalyzes a salvage reaction resulting in the formation of AMP, that is energically less costly than de novo synthesis. The sequence is that of Adenine phosphoribosyltransferase from Mycoplasma capricolum subsp. capricolum (strain California kid / ATCC 27343 / NCTC 10154).